The chain runs to 317 residues: Protein IMPACT-B (317 aa).

The region spanning 17–118 (EEIEALSSIY…EKIREFLTEK (102 aa)) is the RWD domain. The interval 296 to 317 (DSTEETSKAGGKSKKPKSKKTK) is disordered. Basic residues predominate over residues 306-317 (GKSKKPKSKKTK).

Belongs to the IMPACT family. In terms of assembly, interacts with GCN1; prevents the interaction of GCN1 with EIF2AK4/GCN2 and inhibits EIF2AK4/GCN2 kinase activity. Interaction with RPL39; this interaction occurs in a GCN1-independent manner. Associates with ribosomes; this interaction occurs in a GCN1-independent manner. Associates with actin; this interaction occurs in a GCN1-independent manner.

It localises to the cytoplasm. Translational regulator that ensures constant high levels of translation upon a variety of stress conditions, such as amino acid starvation, UV-C irradiation, proteasome inhibitor treatment and glucose deprivation. Plays a role as a negative regulator of the EIF2AK4/GCN2 kinase activity; impairs GCN1-mediated EIF2AK4/GCN2 activation, and hence EIF2AK4/GCN2-mediated eIF-2-alpha phosphorylation and subsequent down-regulation of protein synthesis. Plays a role in differentiation of neuronal cells by stimulating neurite outgrowth. This is Protein IMPACT-B (impact-B) from Xenopus tropicalis (Western clawed frog).